Reading from the N-terminus, the 515-residue chain is 2-isopropylmalate synthase (515 aa).

Residues 4–266 (ISVFDTTLRD…ETGLILKEIK (263 aa)) enclose the Pyruvate carboxyltransferase domain. 4 residues coordinate Mn(2+): D13, H201, H203, and N237. The interval 391–515 (ELQTLQVNYG…AEVYGSKVEV (125 aa)) is regulatory domain.

The protein belongs to the alpha-IPM synthase/homocitrate synthase family. LeuA type 1 subfamily. In terms of assembly, homodimer. Mn(2+) is required as a cofactor.

It localises to the cytoplasm. It carries out the reaction 3-methyl-2-oxobutanoate + acetyl-CoA + H2O = (2S)-2-isopropylmalate + CoA + H(+). The protein operates within amino-acid biosynthesis; L-leucine biosynthesis; L-leucine from 3-methyl-2-oxobutanoate: step 1/4. In terms of biological role, catalyzes the condensation of the acetyl group of acetyl-CoA with 3-methyl-2-oxobutanoate (2-ketoisovalerate) to form 3-carboxy-3-hydroxy-4-methylpentanoate (2-isopropylmalate). This is 2-isopropylmalate synthase from Halalkalibacterium halodurans (strain ATCC BAA-125 / DSM 18197 / FERM 7344 / JCM 9153 / C-125) (Bacillus halodurans).